The primary structure comprises 305 residues: UDP-3-O-acyl-N-acetylglucosamine deacetylase (305 aa).

Zn(2+) contacts are provided by histidine 79, histidine 238, and aspartate 242. The active-site Proton donor is histidine 265.

It belongs to the LpxC family. It depends on Zn(2+) as a cofactor.

The enzyme catalyses a UDP-3-O-[(3R)-3-hydroxyacyl]-N-acetyl-alpha-D-glucosamine + H2O = a UDP-3-O-[(3R)-3-hydroxyacyl]-alpha-D-glucosamine + acetate. It functions in the pathway glycolipid biosynthesis; lipid IV(A) biosynthesis; lipid IV(A) from (3R)-3-hydroxytetradecanoyl-[acyl-carrier-protein] and UDP-N-acetyl-alpha-D-glucosamine: step 2/6. Catalyzes the hydrolysis of UDP-3-O-myristoyl-N-acetylglucosamine to form UDP-3-O-myristoylglucosamine and acetate, the committed step in lipid A biosynthesis. This Salmonella arizonae (strain ATCC BAA-731 / CDC346-86 / RSK2980) protein is UDP-3-O-acyl-N-acetylglucosamine deacetylase.